The sequence spans 152 residues: Ribosome maturation factor RimP (152 aa).

It belongs to the RimP family.

The protein localises to the cytoplasm. In terms of biological role, required for maturation of 30S ribosomal subunits. This is Ribosome maturation factor RimP from Alkalilimnicola ehrlichii (strain ATCC BAA-1101 / DSM 17681 / MLHE-1).